The following is a 382-amino-acid chain: Mannitol-1-phosphate 5-dehydrogenase (382 aa).

Residue 3 to 14 (AVHFGAGNIGRG) coordinates NAD(+).

This sequence belongs to the mannitol dehydrogenase family.

The catalysed reaction is D-mannitol 1-phosphate + NAD(+) = beta-D-fructose 6-phosphate + NADH + H(+). The chain is Mannitol-1-phosphate 5-dehydrogenase from Aliivibrio salmonicida (strain LFI1238) (Vibrio salmonicida (strain LFI1238)).